Reading from the N-terminus, the 75-residue chain is Parvalbumin beta 3 (75 aa).

Alanine 1 bears the N-acetylalanine mark. In terms of domain architecture, EF-hand spans 26-61; it reads YKAFFAKKAFFVIDQDKSGFIEEDELKLFLQVFSAG. Aspartate 39, aspartate 41, serine 43, phenylalanine 45, glutamate 47, and glutamate 50 together coordinate Ca(2+).

It belongs to the parvalbumin family.

In terms of biological role, in muscle, parvalbumin is thought to be involved in relaxation after contraction. It binds two calcium ions. The protein is Parvalbumin beta 3 of Merluccius gayi (South Pacific hake).